A 304-amino-acid polypeptide reads, in one-letter code: Haloalkane dehalogenase (304 aa).

One can recognise an AB hydrolase-1 domain in the interval 42–154; that stretch reads PIVFLHGNPT…DSVDLSPEFV (113 aa). Catalysis depends on D114, which acts as the Nucleophile. E138 serves as the catalytic Proton donor. H280 (proton acceptor) is an active-site residue.

Belongs to the haloalkane dehalogenase family. Type 2 subfamily. In terms of assembly, monomer.

The catalysed reaction is 1-haloalkane + H2O = a halide anion + a primary alcohol + H(+). Functionally, catalyzes hydrolytic cleavage of carbon-halogen bonds in halogenated aliphatic compounds, leading to the formation of the corresponding primary alcohols, halide ions and protons. The polypeptide is Haloalkane dehalogenase (Agrobacterium fabrum (strain C58 / ATCC 33970) (Agrobacterium tumefaciens (strain C58))).